The chain runs to 447 residues: Trigger factor (447 aa).

In terms of domain architecture, PPIase FKBP-type spans 164-249; that stretch reads GNQVTFDFEG…VKLVEKSKLP (86 aa).

It belongs to the FKBP-type PPIase family. Tig subfamily.

The protein resides in the cytoplasm. The catalysed reaction is [protein]-peptidylproline (omega=180) = [protein]-peptidylproline (omega=0). Involved in protein export. Acts as a chaperone by maintaining the newly synthesized protein in an open conformation. Functions as a peptidyl-prolyl cis-trans isomerase. This Psychrobacter cryohalolentis (strain ATCC BAA-1226 / DSM 17306 / VKM B-2378 / K5) protein is Trigger factor.